The chain runs to 97 residues: U-reduvitoxin-Pr11a (97 aa).

The first 20 residues, 1 to 20 (MKTALFLVFALAFIAVEGKM), serve as a signal peptide directing secretion. Pacifastin domains follow at residues 22 to 59 (RACS…CPPR) and 62 to 97 (EKSC…KLCL). Disulfide bonds link C24–C42, C37–C56, and C40–C51. Residues 57–59 (PPR) are pro-Pro-Arg motif necessary for proteolytic processing. Intrachain disulfides connect C65-C82, C77-C96, and C80-C91.

It belongs to the protease inhibitor I19 family. As to expression, expressed by the venom gland.

The protein localises to the secreted. Its function is as follows. Inhibits trypsin activity and prophenoloxidase (PPO) activation, an enzyme essential for both clotting and insect innate immune responses. It does not inhibit activity of chymotrypsin and protease K, and has no effect on phenoloxidase (PO) activity. This chain is U-reduvitoxin-Pr11a, found in Platymeris rhadamanthus (Red spot assassin bug).